Here is a 97-residue protein sequence, read N- to C-terminus: Down syndrome critical region protein 8 (97 aa).

As to expression, expressed in numerous tissues; not found in breast, heart, small intestine and liver. Isoform 1: Predominantly expressed in the testis. Isoform 3: Predominantly expressed in the testis, at lower level in the placenta, during malignant progression of melanocytic tumors and in several tumors of varying origins. Isoform 4: Predominantly expressed in the testis, at lower level in the placenta, during malignant progression of melanocytic tumors and in several tumors of varying origins. Isoform 5: Predominantly expressed in the testis. Isoform 6: Predominantly expressed in the testis.

This Homo sapiens (Human) protein is Down syndrome critical region protein 8.